The primary structure comprises 715 residues: Nucleolar complex protein 2 homolog (715 aa).

3 disordered regions span residues 17-71, 85-132, and 638-715; these read SKRI…HKLD, FLQQ…DKTK, and ERSA…SDED. Over residues 89–128 the composition is skewed to acidic residues; sequence EDADLLNMEDDGDDDEDDDEDDEDEEEEESDDDEDDEEDD. The segment covering 638–660 has biased composition (basic and acidic residues); it reads ERSAVENSKKDDKKKKKEEEAAA.

The protein belongs to the NOC2 family.

Its subcellular location is the nucleus. In terms of biological role, required for normal somatic gonad development and for regulation of germline development and proliferation. This chain is Nucleolar complex protein 2 homolog (pro-2), found in Caenorhabditis elegans.